The sequence spans 156 residues: Pilin-like protein PilA1 (156 aa).

The propeptide at 1 to 5 is leader sequence; it reads MTRRG. Leu-6 is subject to N-methylleucine. A helical transmembrane segment spans residues 6 to 29; the sequence is LTLLELLLVLGILGVLLGLALPLL.

The protein localises to the cell inner membrane. The protein resides in the cell outer membrane. It is found in the periplasm. Plays an essential role in natural DNA transformation but is not required for pilus biogenesis. This Thermus thermophilus (strain ATCC BAA-163 / DSM 7039 / HB27) protein is Pilin-like protein PilA1 (pilA1).